The primary structure comprises 189 residues: Elongation factor P (189 aa).

Residue K34 is modified to N6-(3,6-diaminohexanoyl)-5-hydroxylysine.

Belongs to the elongation factor P family. Post-translationally, may be beta-lysylated on the epsilon-amino group of Lys-34 by the combined action of EpmA and EpmB, and then hydroxylated on the C5 position of the same residue by EpmC (if this protein is present). Lysylation is critical for the stimulatory effect of EF-P on peptide-bond formation. The lysylation moiety may extend toward the peptidyltransferase center and stabilize the terminal 3-CCA end of the tRNA. Hydroxylation of the C5 position on Lys-34 may allow additional potential stabilizing hydrogen-bond interactions with the P-tRNA.

It is found in the cytoplasm. The protein operates within protein biosynthesis; polypeptide chain elongation. Its function is as follows. Involved in peptide bond synthesis. Alleviates ribosome stalling that occurs when 3 or more consecutive Pro residues or the sequence PPG is present in a protein, possibly by augmenting the peptidyl transferase activity of the ribosome. Modification of Lys-34 is required for alleviation. This is Elongation factor P from Buchnera aphidicola subsp. Baizongia pistaciae (strain Bp).